Consider the following 307-residue polypeptide: D-alanine--D-alanine ligase (307 aa).

One can recognise an ATP-grasp domain in the interval 101-301; that stretch reads KTVMRAAGVS…FGELVRWMVE (201 aa). Residue 127–182 coordinates ATP; it reads PLTPPYVVKPIAEGSSMGVIIVRDERSHPPQILASDEWVYGEEVLAETYVAGRELT. Residues D251, E268, and N270 each coordinate Mg(2+).

It belongs to the D-alanine--D-alanine ligase family. The cofactor is Mg(2+). Mn(2+) is required as a cofactor.

Its subcellular location is the cytoplasm. The catalysed reaction is 2 D-alanine + ATP = D-alanyl-D-alanine + ADP + phosphate + H(+). It participates in cell wall biogenesis; peptidoglycan biosynthesis. Functionally, cell wall formation. This Methylorubrum extorquens (strain PA1) (Methylobacterium extorquens) protein is D-alanine--D-alanine ligase.